The sequence spans 528 residues: Pentatricopeptide repeat-containing protein At1g62914, mitochondrial (528 aa).

A mitochondrion-targeting transit peptide spans 1-20 (MLAKISSSAKRFVHRSLVVR). PPR repeat units lie at residues 77 to 111 (SIIEFSKLLSAIAKMNKFDLVISFGEKMEILGISH), 112 to 146 (NLYTYNILINCFCRCSRLSLALALLGKMMKLGYEP), 147 to 181 (DIVTLNSLLNGFCHGNRISDAVALVDQMVEMGYKP), 182 to 216 (DTVTFTTLIHGLFLHNKASEAVALIDRMVQRGCQP), 217 to 251 (DLVTYGAVVNGLCKRGDTDLALNLLNKMEAAKIEA), 252 to 286 (NVVIYSTVIDSLCKYRHEDDALNLFTEMENKGVRP), 287 to 321 (NVITYSSLISCLCNYGRWSDASRLLSDMIERKINP), 322 to 356 (NLVTFSALIDAFVKKGKLVKAEKLYEEMIKRSIDP), 357 to 391 (NIFTYSSLINGFCMLDRLGEAKQMLELMIRKDCLP), 392 to 426 (NVVTYNTLINGFCKAKRVDKGMELFREMSQRGLVG), 427 to 461 (NTVTYTTLIHGFFQARDCDNAQMVFKQMVSVGVHP), 462 to 496 (NILTYNILLDGLCKNGKLAKAMVVFEYLQRSTMEP), and 497 to 528 (DIYTYNIMIEGMCKAGKWKMGGIYFVASALKE).

The protein belongs to the PPR family. P subfamily.

The protein localises to the mitochondrion. This Arabidopsis thaliana (Mouse-ear cress) protein is Pentatricopeptide repeat-containing protein At1g62914, mitochondrial.